The primary structure comprises 441 residues: Methylenetetrahydrofolate--tRNA-(uracil-5-)-methyltransferase TrmFO (441 aa).

Gly11–Gly16 provides a ligand contact to FAD.

It belongs to the MnmG family. TrmFO subfamily. It depends on FAD as a cofactor.

Its subcellular location is the cytoplasm. The catalysed reaction is uridine(54) in tRNA + (6R)-5,10-methylene-5,6,7,8-tetrahydrofolate + NADH + H(+) = 5-methyluridine(54) in tRNA + (6S)-5,6,7,8-tetrahydrofolate + NAD(+). The enzyme catalyses uridine(54) in tRNA + (6R)-5,10-methylene-5,6,7,8-tetrahydrofolate + NADPH + H(+) = 5-methyluridine(54) in tRNA + (6S)-5,6,7,8-tetrahydrofolate + NADP(+). Its function is as follows. Catalyzes the folate-dependent formation of 5-methyl-uridine at position 54 (M-5-U54) in all tRNAs. The sequence is that of Methylenetetrahydrofolate--tRNA-(uracil-5-)-methyltransferase TrmFO from Syntrophus aciditrophicus (strain SB).